The sequence spans 185 residues: Ribosome-recycling factor (185 aa).

The protein belongs to the RRF family.

It is found in the cytoplasm. Functionally, responsible for the release of ribosomes from messenger RNA at the termination of protein biosynthesis. May increase the efficiency of translation by recycling ribosomes from one round of translation to another. The protein is Ribosome-recycling factor of Ehrlichia ruminantium (strain Gardel).